We begin with the raw amino-acid sequence, 275 residues long: Mitochondrial outer membrane porin (275 aa).

The protein belongs to the eukaryotic mitochondrial porin (TC 1.B.8.1) family.

It is found in the mitochondrion outer membrane. Its function is as follows. Forms a channel through the cell membrane that allows diffusion of small hydrophilic molecules. The channel adopts an open conformation at low or zero membrane potential and a closed conformation at potentials above 30-40 mV. The open state has a weak anion selectivity whereas the closed state is cation-selective. The protein is Mitochondrial outer membrane porin (VDAC1) of Triticum aestivum (Wheat).